A 795-amino-acid polypeptide reads, in one-letter code: Phenylalanine--tRNA ligase beta subunit (795 aa).

The tRNA-binding domain maps to 39–148; the sequence is AGSFNGVVVG…ADAPLGTDIR (110 aa). The region spanning 401–476 is the B5 domain; it reads PKRATITLRR…RVYGYNNIPD (76 aa). Positions 454, 460, 463, and 464 each coordinate Mg(2+). The 94-residue stretch at 701–794 folds into the FDX-ACB domain; that stretch reads SRFPANRRDI…LKERFQASLR (94 aa).

The protein belongs to the phenylalanyl-tRNA synthetase beta subunit family. Type 1 subfamily. In terms of assembly, tetramer of two alpha and two beta subunits. Requires Mg(2+) as cofactor.

The protein resides in the cytoplasm. The enzyme catalyses tRNA(Phe) + L-phenylalanine + ATP = L-phenylalanyl-tRNA(Phe) + AMP + diphosphate + H(+). This chain is Phenylalanine--tRNA ligase beta subunit, found in Salmonella paratyphi A (strain ATCC 9150 / SARB42).